Reading from the N-terminus, the 251-residue chain is 5'-nucleotidase SurE (251 aa).

The a divalent metal cation site is built by aspartate 8, aspartate 9, serine 40, and asparagine 95.

Belongs to the SurE nucleotidase family. Requires a divalent metal cation as cofactor.

It localises to the cytoplasm. The enzyme catalyses a ribonucleoside 5'-phosphate + H2O = a ribonucleoside + phosphate. Its function is as follows. Nucleotidase that shows phosphatase activity on nucleoside 5'-monophosphates. The protein is 5'-nucleotidase SurE of Desulfitobacterium hafniense (strain DSM 10664 / DCB-2).